Consider the following 226-residue polypeptide: ATP synthase F(0) complex subunit a (226 aa).

Transmembrane regions (helical) follow at residues 11-31 (SPEL…VLLI), 37-54 (LLGN…MTIM), 72-92 (LTSL…PYTF), 98-118 (LSMN…TGMT), 138-158 (IPFM…ALGV), 178-198 (TLNF…LLFL), and 199-219 (LCIL…LLII).

This sequence belongs to the ATPase A chain family. In terms of assembly, component of the ATP synthase complex composed at least of ATP5F1A/subunit alpha, ATP5F1B/subunit beta, ATP5MC1/subunit c (homooctomer), MT-ATP6/subunit a, MT-ATP8/subunit 8, ATP5ME/subunit e, ATP5MF/subunit f, ATP5MG/subunit g, ATP5MK/subunit k, ATP5MJ/subunit j, ATP5F1C/subunit gamma, ATP5F1D/subunit delta, ATP5F1E/subunit epsilon, ATP5PF/subunit F6, ATP5PB/subunit b, ATP5PD/subunit d, ATP5PO/subunit OSCP. ATP synthase complex consists of a soluble F(1) head domain (subunits alpha(3) and beta(3)) - the catalytic core - and a membrane F(0) domain - the membrane proton channel (subunits c, a, 8, e, f, g, k and j). These two domains are linked by a central stalk (subunits gamma, delta, and epsilon) rotating inside the F1 region and a stationary peripheral stalk (subunits F6, b, d, and OSCP). Interacts with DNAJC30; interaction is direct.

Its subcellular location is the mitochondrion inner membrane. It catalyses the reaction H(+)(in) = H(+)(out). Subunit a, of the mitochondrial membrane ATP synthase complex (F(1)F(0) ATP synthase or Complex V) that produces ATP from ADP in the presence of a proton gradient across the membrane which is generated by electron transport complexes of the respiratory chain. ATP synthase complex consist of a soluble F(1) head domain - the catalytic core - and a membrane F(1) domain - the membrane proton channel. These two domains are linked by a central stalk rotating inside the F(1) region and a stationary peripheral stalk. During catalysis, ATP synthesis in the catalytic domain of F(1) is coupled via a rotary mechanism of the central stalk subunits to proton translocation. With the subunit c (ATP5MC1), forms the proton-conducting channel in the F(0) domain, that contains two crucial half-channels (inlet and outlet) that facilitate proton movement from the mitochondrial intermembrane space (IMS) into the matrix. Protons are taken up via the inlet half-channel and released through the outlet half-channel, following a Grotthuss mechanism. The sequence is that of ATP synthase F(0) complex subunit a from Lycodon semicarinatus (Ryukyu odd-tooth snake).